Here is a 988-residue protein sequence, read N- to C-terminus: Chloride channel protein 1 (988 aa).

Residues 1-118 (MEQSRSQQRG…VVRRKLGEDG (118 aa)) lie on the Cytoplasmic side of the membrane. Residues 65 to 75 (HKEQFSDREQD) are compositionally biased toward basic and acidic residues. The disordered stretch occupies residues 65–92 (HKEQFSDREQDIGMPKKTGSSSTVDSKD). A helical membrane pass occupies residues 119–150 (IFLVLLGLLMALVSWSMDYVSAKSLQAYKWSY). Topologically, residues 151–158 (AQMQPSLP) are extracellular. Residues 159 to 179 (LQFLVWVTFPLVLILFSALFC) traverse the membrane as a helical segment. At 180 to 183 (HLIS) the chain is on the cytoplasmic side. An intramembrane region (note=Loop between two helices) is located at residues 184 to 189 (PQAVGS). The Selectivity filter part_1 signature appears at 188-192 (GSGIP). Chloride is bound at residue serine 189. The helical intramembrane region spans 190–195 (GIPEMK). The Cytoplasmic portion of the chain corresponds to 196 to 208 (TILRGVVLKEYLT). The helical intramembrane region spans 209 to 224 (MKAFVAKVVALTAGLG). Residues 225–230 (SGIPVG) constitute an intramembrane region (note=Loop between two helices). The Selectivity filter part_2 motif lies at 230–234 (GKEGP). Positions 231–246 (KEGPFVHIASICAAVL) form an intramembrane region, helical. Residues 247-268 (SKFMSVFCGVYEQPYYYSDILT) are Cytoplasmic-facing. 2 consecutive intramembrane regions (helical) follow at residues 269–280 (VGCAVGVGCCFG) and 281–290 (TPLGGVLFSI). At 291–301 (EVTSTYFAVRN) the chain is on the cytoplasmic side. A helical transmembrane segment spans residues 302 to 321 (YWRGFFAATFSAFVFRVLAV). The Extracellular segment spans residues 322 to 347 (WNKDAVTITALFRTNFRMDFPFDLKE). Residues 348 to 376 (LPAFAAIGICCGLLGAVFVYLHRQVMLGV) form a helical membrane-spanning segment. Over 377 to 390 (RKHKALSQFLAKHR) the chain is Cytoplasmic. Residues 391 to 408 (LLYPGIVTFVIASFTFPP) traverse the membrane as a helical segment. Topologically, residues 409-414 (GMGQFM) are extracellular. The note=Loop between two helices intramembrane region spans 415–418 (AGEL). An intramembrane region (helical) is located at residues 419-426 (MPREAIST). Over 427 to 457 (LFDNNTWVKHAGDPESLGQSAVWIHPRVNVV) the chain is Extracellular. Residues 458 to 475 (IIIFLFFVMKFWMSIVAT) constitute an intramembrane region (helical). The segment at residues 476-482 (TMPIPCG) is an intramembrane region (note=Loop between two helices). The Selectivity filter part_3 motif lies at 482–486 (GGFMP). The segment at residues 483–498 (GFMPVFVLGAAFGRLV) is an intramembrane region (helical). Chloride is bound at residue phenylalanine 484. Topologically, residues 499-521 (GEIMAMLFPDGILFDDIIYKILP) are extracellular. An intramembrane region (helical) is located at residues 522–538 (GGYAVIGAAALTGAVSH). Residues 539 to 540 (TV) constitute an intramembrane region (note=Loop between two helices). The segment at residues 541–554 (STAVICFELTGQIA) is an intramembrane region (helical). Over 555-557 (HIL) the chain is Extracellular. The helical intramembrane region spans 558–571 (PMMVAVILANMVAQ). An intramembrane region (note=Loop between two helices) is located at residues 572–575 (SLQP). The helical intramembrane region spans 576–578 (SLY). Tyrosine 578 serves as a coordination point for chloride. At 579-988 (DSIIQVKKLP…DEEDEDELIL (410 aa)) the chain is on the cytoplasmic side. The 60-residue stretch at 609–668 (MVRDVKFVSASYTYGELRTLLQTTTVKTLPLVDSKDSMILLGSVERSELQALLQRHLCPE) folds into the CBS 1 domain. A disordered region spans residues 713 to 764 (EDEDEDLSGKSELPPSLALHPSTTAPLSPEEPNGPLPGHKQQPEAPEPAGQR). The CBS 2 domain maps to 821 to 876 (IDQSPFQLVEQTTLHKTHTLFSLLGLHLAYVTSMGKLRGVLALEELQKAIEGHTKS). The segment at 880–988 (LRPPLASFRN…DEEDEDELIL (109 aa)) is disordered. Serine 886 is subject to Phosphoserine. The span at 887–906 (FRNTTSTRKSTGAPPSSAEN) shows a compositional bias: polar residues. Residues 929–941 (TPVPSPSPEPPLS) show a composition bias toward pro residues. 2 stretches are compositionally biased toward acidic residues: residues 950 to 967 (ELEELELVESPGLEEELA) and 979 to 988 (DEEDEDELIL).

This sequence belongs to the chloride channel (TC 2.A.49) family. ClC-1/CLCN1 subfamily. In terms of assembly, homodimer. In terms of tissue distribution, predominantly expressed in skeletal muscles.

The protein localises to the cell membrane. It is found in the sarcolemma. The protein resides in the T-tubule. The enzyme catalyses chloride(in) = chloride(out). It catalyses the reaction thiocyanate(in) = thiocyanate(out). The catalysed reaction is bromide(in) = bromide(out). It carries out the reaction nitrate(in) = nitrate(out). The enzyme catalyses iodide(out) = iodide(in). Its activity is regulated as follows. Modulated by membrane voltage with depolarization favouring channel opening and hyperpolarization favouring channel closure. Inhibited by acidic pH and ATP binding due to a shift of voltage dependence of common gating to more positive voltages. Inhibited by 9-anthracene-carboxylic. Functionally, voltage-gated chloride channel involved in skeletal muscle excitability. Generates most of the plasma membrane chloride conductance in skeletal muscle fibers, stabilizes the resting membrane potential and contributes to the repolarization phase during action potential firing. Forms a homodimeric channel where each subunit has its own ion conduction pathway. Conducts double-barreled currents controlled by two types of gates, two fast glutamate gates that control each subunit independently and a slow common gate that opens and shuts off both subunits simultaneously. Has a significant open probability at muscle resting potential and is further activated upon membrane depolarization. Permeable to small monovalent anions with ion selectivity for chloride &gt; thiocyanate &gt; bromide &gt; nitrate &gt; iodide. This is Chloride channel protein 1 from Homo sapiens (Human).